A 445-amino-acid polypeptide reads, in one-letter code: Phosphoglucosamine mutase (445 aa).

Serine 102 acts as the Phosphoserine intermediate in catalysis. Residues serine 102, aspartate 241, aspartate 243, and aspartate 245 each coordinate Mg(2+). Residue serine 102 is modified to Phosphoserine.

Belongs to the phosphohexose mutase family. Requires Mg(2+) as cofactor. Activated by phosphorylation.

It carries out the reaction alpha-D-glucosamine 1-phosphate = D-glucosamine 6-phosphate. In terms of biological role, catalyzes the conversion of glucosamine-6-phosphate to glucosamine-1-phosphate. The protein is Phosphoglucosamine mutase of Klebsiella pneumoniae (strain 342).